Here is an 877-residue protein sequence, read N- to C-terminus: MKLNEIRERFIKFFVNNDHEQVSSSPLIPEHDPTLMFTNAGMVQFKNIFTGAQKTEMKRAVSSQKCLRAGGKHNDLENVGYTTRHHTFFEMLGNFSFGDYFKETAIEFAWEFITKELSLDKNRLSITVYHTDDEAYEIWRKISGFSSDKIIRITTDDNFWSMGSTGPCGPCSEIFYDHGSPNLQEGDRIVEIWNLVFMEFNKDEEGNLHKLPKKCIDTGMGLERIAAVMQNVHDNYDIDLFSALISKSQEYCGRTENKIAHKIIADHLRAAAFLIAEGVLPGNEGRNYVLRRLIRRATRYIHLLGYNDSLLHRIFPVLIDSTSSAYMGAELVRAKSLIETTLKSEEENFKDTLMKGINLLEKFTTDLKSGDTLPGESAFKLYDTYGFPLDITLDVLKEKKINFDQKGFDDAMGEQKERARAKWAGSGEKSVEQVWFDLINKFGKTKFVGYEFNEVSDAKILAIVSSKNEVIDSAKEGEKITIILDKTPFYGESGGQVGDTGSLIKSDRSIIIVENTNKVNDLYLHRCIVKFGSICKGNTVAASIDKERRQTLRRNHSATHLLHFTLRKILGDHVTQKGSLVAPDRLRFDFSHNTQMTQDQLFWVEDMVNSLIRENLSASTKIQSMNQAIDEGAMALFGEKYGNQVRVVKIGDSRELCGGTHVEHTGEIGLFKIVTESSVAFGVRRIEALTGQEAINYVRDNEINLKKVAEFVKAPVSEITSRLSILSQEHKKSETKIKNLYKKLVSAENIKSTEINGINFISHTFTDIPANVIREFVLQQQKPKTVIAFTATEKDKTVLIIKVSKDLINKISAKELISIAVKKNCGGNAELAQTGCDSNKIDDAITAIYSKITASKHSTSYHHEPSYRRGANKQRDT.

Residues H556, H560, C657, and H661 each coordinate Zn(2+).

It belongs to the class-II aminoacyl-tRNA synthetase family. Zn(2+) is required as a cofactor.

It is found in the cytoplasm. The enzyme catalyses tRNA(Ala) + L-alanine + ATP = L-alanyl-tRNA(Ala) + AMP + diphosphate. Its function is as follows. Catalyzes the attachment of alanine to tRNA(Ala) in a two-step reaction: alanine is first activated by ATP to form Ala-AMP and then transferred to the acceptor end of tRNA(Ala). Also edits incorrectly charged Ser-tRNA(Ala) and Gly-tRNA(Ala) via its editing domain. The protein is Alanine--tRNA ligase of Wolbachia pipientis wMel.